The primary structure comprises 164 residues: Protein LIGHT-DEPENDENT SHORT HYPOCOTYLS 8 (164 aa).

The 128-residue stretch at 23–150 folds into the ALOG domain; the sequence is RYESQKSRDW…ARGVLYKKKK (128 aa). Positions 148–152 match the Nuclear localization signal motif; it reads KKKRL.

This sequence belongs to the plant homeotic and developmental regulators ALOG protein family.

It localises to the nucleus. In terms of biological role, probable transcription regulator that acts as a developmental regulator by promoting cell growth in response to light. The chain is Protein LIGHT-DEPENDENT SHORT HYPOCOTYLS 8 (LSH8) from Arabidopsis thaliana (Mouse-ear cress).